The primary structure comprises 385 residues: tRNA-specific 2-thiouridylase MnmA (385 aa).

Residues 29 to 36 (GLSGGVDS) and leucine 55 contribute to the ATP site. The active-site Nucleophile is cysteine 116. Cysteine 116 and cysteine 225 are disulfide-bonded. Glycine 141 provides a ligand contact to ATP. An interaction with tRNA region spans residues 175 to 177 (KDQ). Cysteine 225 functions as the Cysteine persulfide intermediate in the catalytic mechanism. Residues 330–331 (RY) form an interaction with tRNA region.

Belongs to the MnmA/TRMU family.

It is found in the cytoplasm. The enzyme catalyses S-sulfanyl-L-cysteinyl-[protein] + uridine(34) in tRNA + AH2 + ATP = 2-thiouridine(34) in tRNA + L-cysteinyl-[protein] + A + AMP + diphosphate + H(+). In terms of biological role, catalyzes the 2-thiolation of uridine at the wobble position (U34) of tRNA, leading to the formation of s(2)U34. The sequence is that of tRNA-specific 2-thiouridylase MnmA from Prochlorococcus marinus (strain AS9601).